The following is a 287-amino-acid chain: Inositol-1-monophosphatase (287 aa).

Glu79, Asp96, Leu98, and Asp99 together coordinate Mg(2+). Glu79 contributes to the substrate binding site. Residues 98–101 (LDGT), Arg195, and Asp224 contribute to the substrate site. Asp224 serves as a coordination point for Mg(2+).

This sequence belongs to the inositol monophosphatase superfamily. Requires Mg(2+) as cofactor.

The enzyme catalyses a myo-inositol phosphate + H2O = myo-inositol + phosphate. The polypeptide is Inositol-1-monophosphatase (suhB) (Synechocystis sp. (strain ATCC 27184 / PCC 6803 / Kazusa)).